Reading from the N-terminus, the 309-residue chain is tRNA uridine(34) hydroxylase (309 aa).

Residues 130 to 224 (SDPDTIVIDT…YLEEVPQEES (95 aa)) enclose the Rhodanese domain. The Cysteine persulfide intermediate role is filled by Cys184.

This sequence belongs to the TrhO family.

It catalyses the reaction uridine(34) in tRNA + AH2 + O2 = 5-hydroxyuridine(34) in tRNA + A + H2O. Its function is as follows. Catalyzes oxygen-dependent 5-hydroxyuridine (ho5U) modification at position 34 in tRNAs. This chain is tRNA uridine(34) hydroxylase, found in Rhizobium leguminosarum bv. trifolii (strain WSM2304).